A 278-amino-acid polypeptide reads, in one-letter code: 4-deoxy-L-threo-5-hexosulose-uronate ketol-isomerase (278 aa).

Residues His196, His198, Glu203, and His245 each contribute to the Zn(2+) site.

Belongs to the KduI family. As to quaternary structure, homohexamer. Requires Zn(2+) as cofactor.

It carries out the reaction 5-dehydro-4-deoxy-D-glucuronate = 3-deoxy-D-glycero-2,5-hexodiulosonate. It functions in the pathway glycan metabolism; pectin degradation; 2-dehydro-3-deoxy-D-gluconate from pectin: step 4/5. Its function is as follows. Catalyzes the isomerization of 5-dehydro-4-deoxy-D-glucuronate to 3-deoxy-D-glycero-2,5-hexodiulosonate. The chain is 4-deoxy-L-threo-5-hexosulose-uronate ketol-isomerase from Escherichia coli O127:H6 (strain E2348/69 / EPEC).